Consider the following 160-residue polypeptide: Dr hemagglutinin structural subunit (160 aa).

The N-terminal stretch at 1 to 21 (MKKLAIMAAASMVFAVSSAHA) is a signal peptide. The receptor-binding stretch occupies residues 22 to 75 (GFTPSGTTGTTKLTVTEECQVRVGDLTVAKTRGQLTDAAPIGPVTVQALGCDAR).

It belongs to the Dr-adhesin family.

The protein localises to the fimbrium. Hemagglutinins of uropathogenic E.coli mediate adherence to the upper urinary tract. These adhesins bind to the Dr blood group antigen and also agglutinate human erythrocytes in the presence of D-mannose (mannose-resistant hemagglutination (MRHA)). This Escherichia coli protein is Dr hemagglutinin structural subunit (draA).